Reading from the N-terminus, the 418-residue chain is Fumarylacetoacetase (418 aa).

Aspartate 127 is a Ca(2+) binding site. Residue histidine 134 is the Proton acceptor of the active site. Residues glutamate 200, glutamate 202, and aspartate 235 each coordinate Ca(2+). 3 residues coordinate Mg(2+): aspartate 235, lysine 255, and threonine 259.

This sequence belongs to the FAH family. It depends on Ca(2+) as a cofactor. The cofactor is Mg(2+). In terms of tissue distribution, highly expressed in the intestine and the hypodermis.

It catalyses the reaction 4-fumarylacetoacetate + H2O = acetoacetate + fumarate + H(+). It functions in the pathway amino-acid degradation; L-phenylalanine degradation; acetoacetate and fumarate from L-phenylalanine: step 6/6. Its function is as follows. Fumarylacetoacetase involved in the tyrosine degradation pathway. This is Fumarylacetoacetase from Caenorhabditis elegans.